A 91-amino-acid polypeptide reads, in one-letter code: uncharacterized protein (91 aa).

Residues 71 to 91 (NRENNSRSSVKQIINQETEEE) form a disordered region. Over residues 76–91 (SRSSVKQIINQETEEE) the composition is skewed to polar residues.

This is an uncharacterized protein from Bacillus subtilis (strain 168).